The chain runs to 289 residues: Glycine--tRNA ligase alpha subunit (289 aa).

It belongs to the class-II aminoacyl-tRNA synthetase family. As to quaternary structure, tetramer of two alpha and two beta subunits.

Its subcellular location is the cytoplasm. It carries out the reaction tRNA(Gly) + glycine + ATP = glycyl-tRNA(Gly) + AMP + diphosphate. The polypeptide is Glycine--tRNA ligase alpha subunit (Rickettsia akari (strain Hartford)).